The primary structure comprises 88 residues: Small integral membrane protein 13 (88 aa).

A helical transmembrane segment spans residues 10–30 (LVFVATLLIVLLLMVCGWYFV). The span at 48–61 (TGSQEGDNEQPSGS) shows a compositional bias: polar residues. The disordered stretch occupies residues 48 to 88 (TGSQEGDNEQPSGSETEEDPSASPQKIRSARQRRPPVDAGH). S59 and S61 each carry phosphoserine. At T63 the chain carries Phosphothreonine. A Phosphoserine modification is found at S70.

Belongs to the SMIM13 family.

The protein localises to the membrane. The chain is Small integral membrane protein 13 (Smim13) from Mus musculus (Mouse).